We begin with the raw amino-acid sequence, 499 residues long: Glutelin type-A 1 (499 aa).

Residues Met-1–Ala-24 form the signal peptide. 2 cysteine pairs are disulfide-bonded: Cys-46-Cys-79 and Cys-122-Cys-313. Cupin type-1 domains lie at Leu-51–Arg-248 and Gln-319–Gln-468.

The protein belongs to the 11S seed storage protein (globulins) family. In terms of assembly, hexamer; each subunit is composed of an acidic and a basic chain derived from a single precursor and linked by a disulfide bond.

Seed storage protein. In Oryza sativa subsp. japonica (Rice), this protein is Glutelin type-A 1 (GLUA1).